Here is a 1378-residue protein sequence, read N- to C-terminus: Disease resistance protein RRS1 (1378 aa).

One can recognise a TIR domain in the interval Glu-5–His-146. Residues Ile-170 to His-421 enclose the NB-ARC domain. Gly-179–Thr-186 contacts ATP. LRR repeat units follow at residues Ser-498–Asn-522, Asn-535–Pro-553, Asn-554–Pro-575, His-577–Leu-598, Ala-621–Arg-646, Pro-665–Pro-688, Leu-742–Gly-766, Pro-768–Ile-793, and Pro-831–Leu-854. The short motif at Arg-988 to Asp-1005 is the Nuclear localization signal element. A DNA-binding region (WRKY) is located at residues Ile-1204 to Pro-1272. The tract at residues Arg-1300 to Arg-1321 is disordered.

In terms of assembly, interacts with PopP2, a R.solanacearum type III effector.

Its subcellular location is the nucleus. The protein resides in the cytoplasm. Transcription factor. Interacts specifically with the W box (5'-(T)TGAC[CT]-3'), a frequently occurring elicitor-responsive cis-acting element. Also acts as a disease resistance protein involved in resistance to fungal and bacterial pathogens, including R.solanacearum, P.syringae pv. tomato and C.higginsianum. RRS1 mediated resistance depends on salicylic acid and NDR1 (AC O48915). This chain is Disease resistance protein RRS1, found in Arabidopsis thaliana (Mouse-ear cress).